The chain runs to 245 residues: Putative binding protein HI_1525 (245 aa).

The signal sequence occupies residues 1 to 19; the sequence is MKKLVAVTSMILTTFSVQA. Positions 56 and 163 each coordinate molybdate.

It belongs to the bacterial solute-binding protein ModA family.

The protein localises to the periplasm. Functionally, probably involved in the binding-dependent system. The chain is Putative binding protein HI_1525 from Haemophilus influenzae (strain ATCC 51907 / DSM 11121 / KW20 / Rd).